A 540-amino-acid chain; its full sequence is Phosphatidylinositol 4-phosphate 5-kinase type-1 beta (540 aa).

Residues 1-21 (MSSAAENGEAAPGKQNEEKTY) are disordered. Positions 25-395 (ASSAIKGAIQ…RFLKFMNSRV (371 aa)) constitute a PIPK domain. Phosphoserine occurs at positions 445, 447, and 448.

As to quaternary structure, interacts with RAC1, AJUBA, PLD1, PLD2 and ARF1. In terms of tissue distribution, detected in heart, pancreas, brain, kidney, skeletal muscle and lung.

The protein localises to the cytoplasm. It is found in the cytosol. Its subcellular location is the cell membrane. It localises to the endomembrane system. It carries out the reaction a 1,2-diacyl-sn-glycero-3-phospho-(1D-myo-inositol 4-phosphate) + ATP = a 1,2-diacyl-sn-glycero-3-phospho-(1D-myo-inositol-4,5-bisphosphate) + ADP + H(+). It catalyses the reaction 1-octadecanoyl-2-(5Z,8Z,11Z,14Z)-eicosatetraenoyl-sn-glycero-3-phospho-1D-myo-inositol 4-phosphate + ATP = 1-octadecanoyl-2-(5Z,8Z,11Z,14Z)-eicosatetraenoyl-sn-glycero-3-phospho-1D-myo-inositol 4,5-bisphosphate + ADP + H(+). The catalysed reaction is 1-octadecanoyl-2-(9Z)-octadecenoyl-sn-glycero-3-phospho-1D-myo-inositol 4-phosphate + ATP = 1-octadecanoyl-2-(9Z)-octadecenoyl-sn-glycero-3-phospho-1D-myo-inositol 4,5-bisphosphate + ADP + H(+). The enzyme catalyses 1-octadecanoyl-2-(9Z)-octadecenoyl-sn-glycero-3-phospho-1D-myo-inositol + ATP = 1-octadecanoyl-2-(9Z)-octadecenoyl-sn-glycero-3-phospho-1D-myo-inositol 5-phosphate + ADP + H(+). It carries out the reaction 1-octadecanoyl-2-(9Z,12Z)-octadecadienoyl-sn-glycero-3-phospho-1D-myo-inositol + ATP = 1-octadecanoyl-2-(9Z,12Z)-octadecadienoyl-sn-glycero-3-phospho-1D-myo-inositol 5-phosphate + ADP + H(+). It catalyses the reaction 1-octadecanoyl-2-(5Z,8Z,11Z,14Z-eicosatetraenoyl)-sn-glycero-3-phospho-(1D-myo-inositol) + ATP = 1-octadecanoyl-2-(5Z,8Z,11Z,14Z)-eicosatetraenoyl-sn-glycero-3-phospho-1D-myo-inositol 5-phosphate + ADP + H(+). The catalysed reaction is 1,2-di-(9Z,12Z)-octadecadienoyl-sn-glycero-3-phospho-1D-myo-inositol + ATP = 1,2-di(9Z,12Z)-octadecadienoyl-sn-glycero-3-phospho-1D-myo-inositol 5-phosphate + ADP + H(+). In terms of biological role, catalyzes the phosphorylation of phosphatidylinositol 4-phosphate (PtdIns(4)P/PI4P) to form phosphatidylinositol 4,5-bisphosphate (PtdIns(4,5)P2/PIP2), a lipid second messenger that regulates several cellular processes such as signal transduction, vesicle trafficking, actin cytoskeleton dynamics, cell adhesion, and cell motility. PtdIns(4,5)P2 can directly act as a second messenger or can be utilized as a precursor to generate other second messengers: inositol 1,4,5-trisphosphate (IP3), diacylglycerol (DAG) or phosphatidylinositol-3,4,5-trisphosphate (PtdIns(3,4,5)P3/PIP3). Mediates RAC1-dependent reorganization of actin filaments. Contributes to the activation of phospholipase PLD2. Together with PIP5K1A, is required, after stimulation by G-protein coupled receptors, for the synthesis of IP3 that will induce stable platelet adhesion. This chain is Phosphatidylinositol 4-phosphate 5-kinase type-1 beta, found in Homo sapiens (Human).